A 96-amino-acid polypeptide reads, in one-letter code: MRDPRDIIKRPVITERSMEMMAEKKYTFDVDVKSNKTEVKDALEAIFGVKVEKVNIMNYKPKAKRVGRHAGFTSRRRKAIVKLTADSKEIEIFQGV.

It belongs to the universal ribosomal protein uL23 family. Part of the 50S ribosomal subunit. Contacts protein L29, and trigger factor when it is bound to the ribosome.

One of the early assembly proteins it binds 23S rRNA. One of the proteins that surrounds the polypeptide exit tunnel on the outside of the ribosome. Forms the main docking site for trigger factor binding to the ribosome. This Bacillus cereus (strain ATCC 10987 / NRS 248) protein is Large ribosomal subunit protein uL23.